Consider the following 216-residue polypeptide: FMN-dependent NADH:quinone oxidoreductase (216 aa).

Residues 15-17 (SVS) and 139-142 (SRGG) each bind FMN.

This sequence belongs to the azoreductase type 1 family. Homodimer. Requires FMN as cofactor.

The enzyme catalyses 2 a quinone + NADH + H(+) = 2 a 1,4-benzosemiquinone + NAD(+). It catalyses the reaction N,N-dimethyl-1,4-phenylenediamine + anthranilate + 2 NAD(+) = 2-(4-dimethylaminophenyl)diazenylbenzoate + 2 NADH + 2 H(+). In terms of biological role, quinone reductase that provides resistance to thiol-specific stress caused by electrophilic quinones. Functionally, also exhibits azoreductase activity. Catalyzes the reductive cleavage of the azo bond in aromatic azo compounds to the corresponding amines. In Acidovorax ebreus (strain TPSY) (Diaphorobacter sp. (strain TPSY)), this protein is FMN-dependent NADH:quinone oxidoreductase.